A 676-amino-acid chain; its full sequence is Multisubstrate pseudouridine synthase 7 (676 aa).

Disordered stretches follow at residues 1 to 27 and 87 to 110; these read MSDS…AKKL and KMPK…AARR. Serine 2 carries the post-translational modification N-acetylserine. Positions 94 to 110 are enriched in basic and acidic residues; that stretch reads RSKEEVNAEKESEAARR. The active-site Nucleophile is the aspartate 256. Residues 338–582 form the TRUD domain; the sequence is GFINYFGMQR…AGSYRTVIQK (245 aa).

Belongs to the pseudouridine synthase TruD family.

The protein localises to the nucleus. It localises to the cytoplasm. The catalysed reaction is uridine in 5S rRNA = pseudouridine in 5S rRNA. The enzyme catalyses uridine in snRNA = pseudouridine in snRNA. It carries out the reaction uridine(13) in tRNA = pseudouridine(13) in tRNA. It catalyses the reaction a uridine in mRNA = a pseudouridine in mRNA. In terms of biological role, catalyzes pseudouridylation at position 35 in U2 snRNA stem-loop II region which induces particular conformation of the mRNA-U2 snRNA duplex and places the nucleophile in an accessible position for the first step of splicing. Also catalyzes pseudouridylation at position 56 in U2 snRNA. Also catalyzes pseudouridylation at position 50 in 5S rRNA, position 13 in cytoplasmic tRNAs, and position 35 in pre-tRNA(Tyr). Pseudouridine residues in tRNAs may stabilize the local RNA conformation, favor interactions with protein partners and play an important role in the stabilization of the codon-anticodon interaction with mRNA. Also catalyzes pseudouridylation of mRNAs in response to heat shock: mediates pseudouridylation of mRNAs with the consensus sequence 5'-UGUAR-3'. In Saccharomyces cerevisiae (strain ATCC 204508 / S288c) (Baker's yeast), this protein is Multisubstrate pseudouridine synthase 7.